Consider the following 264-residue polypeptide: Glutamate racemase (264 aa).

Residues Asp-10 to Ser-11 and Tyr-42 to Gly-43 contribute to the substrate site. Cys-73 acts as the Proton donor/acceptor in catalysis. Asn-74–Thr-75 provides a ligand contact to substrate. Cys-183 acts as the Proton donor/acceptor in catalysis. Thr-184 to His-185 lines the substrate pocket.

This sequence belongs to the aspartate/glutamate racemases family. As to quaternary structure, homodimer.

It catalyses the reaction L-glutamate = D-glutamate. Its pathway is cell wall biogenesis; peptidoglycan biosynthesis. Provides the (R)-glutamate required for cell wall biosynthesis. This chain is Glutamate racemase, found in Streptococcus pyogenes serotype M1.